Reading from the N-terminus, the 156-residue chain is MNINATLIGQSVAFFIFVLFCMKFVWPPVIAALQERQKKIADGLDAANRAARDLELAHEKAGQQLREAKAQAAEIVEQAKKRANQIVDEARDQARAEGERLKAQAQAEIEQELNSVKDALRAQVGTLAVTGAEKILGASIDANAHEQLVSKLAAEI.

A helical membrane pass occupies residues 12-32 (VAFFIFVLFCMKFVWPPVIAA).

This sequence belongs to the ATPase B chain family. As to quaternary structure, F-type ATPases have 2 components, F(1) - the catalytic core - and F(0) - the membrane proton channel. F(1) has five subunits: alpha(3), beta(3), gamma(1), delta(1), epsilon(1). F(0) has three main subunits: a(1), b(2) and c(10-14). The alpha and beta chains form an alternating ring which encloses part of the gamma chain. F(1) is attached to F(0) by a central stalk formed by the gamma and epsilon chains, while a peripheral stalk is formed by the delta and b chains.

The protein localises to the cell inner membrane. F(1)F(0) ATP synthase produces ATP from ADP in the presence of a proton or sodium gradient. F-type ATPases consist of two structural domains, F(1) containing the extramembraneous catalytic core and F(0) containing the membrane proton channel, linked together by a central stalk and a peripheral stalk. During catalysis, ATP synthesis in the catalytic domain of F(1) is coupled via a rotary mechanism of the central stalk subunits to proton translocation. Functionally, component of the F(0) channel, it forms part of the peripheral stalk, linking F(1) to F(0). The chain is ATP synthase subunit b from Pseudomonas paraeruginosa (strain DSM 24068 / PA7) (Pseudomonas aeruginosa (strain PA7)).